Consider the following 532-residue polypeptide: Intercellular adhesion molecule 1 (532 aa).

Positions 1-27 (MAPSSPRPALPALLVLLGALFPGPGNA) are cleaved as a signal peptide. At 28 to 480 (QTSVSPPKVI…TVNVLSPRYE (453 aa)) the chain is on the extracellular side. 2 Ig-like C2-type domains span residues 41–103 (GGSV…QSTA) and 128–193 (GKDL…LDLR). 3 disulfides stabilise this stretch: cysteine 48–cysteine 92, cysteine 52–cysteine 96, and cysteine 135–cysteine 186. The short motif at 152-154 (RGE) is the Cell attachment site; atypical element. Asparagine 202 and asparagine 267 each carry an N-linked (GlcNAc...) asparagine glycan. Ig-like C2-type domains follow at residues 230–297 (DTQG…LGTQ) and 325–378 (GTEV…LEVA). 2 disulfides stabilise this stretch: cysteine 237–cysteine 290 and cysteine 332–cysteine 371. Asparagine 385 and asparagine 406 each carry an N-linked (GlcNAc...) asparagine glycan. 3 cysteine pairs are disulfide-bonded: cysteine 403-cysteine 419, cysteine 419-cysteine 457, and cysteine 431-cysteine 457. The Ig-like C2-type 5 domain occupies 412 to 464 (NSQQTPMCQAWGNPLPELKCLKDGTFPLPVGESVTVTRDLEGTYLCRARSTQG). A helical membrane pass occupies residues 481 to 503 (FVIIAVVAAAVIMGTAGLSTYLY). Topologically, residues 504-532 (NRQRKIRKYRLQQAQKGTPMKPNTQATPP) are cytoplasmic. Phosphothreonine is present on residues threonine 521 and threonine 530.

It belongs to the immunoglobulin superfamily. ICAM family. As to quaternary structure, homodimer. Interacts with MUC1 and promotes cell aggregation in epithelial cells. Interacts with ARHGEF26/SGEF. Interacts (on T cell side) with CD81, CD247 and CD9 at immunological synapses between antigen-presenting cells and T cells. Post-translationally, monoubiquitinated, which is promoted by MARCH9 and leads to endocytosis.

It localises to the membrane. Functionally, ICAM proteins are ligands for the leukocyte adhesion protein LFA-1 (integrin alpha-L/beta-2). During leukocyte trans-endothelial migration, ICAM1 engagement promotes the assembly of endothelial apical cups through ARHGEF26/SGEF and RHOG activation. This chain is Intercellular adhesion molecule 1 (ICAM1), found in Gorilla gorilla gorilla (Western lowland gorilla).